The primary structure comprises 213 residues: ATP synthase subunit b 2 (213 aa).

Positions 1–45 (MFVTEAYAQSAPTVGETHTETPAVGQPQPEATHTETGVAHGAEHG) are disordered. Residues 57-76 (TYASQVLWLAITFGLFYLLM) form a helical membrane-spanning segment.

It belongs to the ATPase B chain family. In terms of assembly, F-type ATPases have 2 components, F(1) - the catalytic core - and F(0) - the membrane proton channel. F(1) has five subunits: alpha(3), beta(3), gamma(1), delta(1), epsilon(1). F(0) has three main subunits: a(1), b(2) and c(10-14). The alpha and beta chains form an alternating ring which encloses part of the gamma chain. F(1) is attached to F(0) by a central stalk formed by the gamma and epsilon chains, while a peripheral stalk is formed by the delta and b chains.

The protein resides in the cell inner membrane. Its function is as follows. F(1)F(0) ATP synthase produces ATP from ADP in the presence of a proton or sodium gradient. F-type ATPases consist of two structural domains, F(1) containing the extramembraneous catalytic core and F(0) containing the membrane proton channel, linked together by a central stalk and a peripheral stalk. During catalysis, ATP synthesis in the catalytic domain of F(1) is coupled via a rotary mechanism of the central stalk subunits to proton translocation. Functionally, component of the F(0) channel, it forms part of the peripheral stalk, linking F(1) to F(0). The b'-subunit is a diverged and duplicated form of b found in plants and photosynthetic bacteria. The protein is ATP synthase subunit b 2 (atpF2) of Agrobacterium fabrum (strain C58 / ATCC 33970) (Agrobacterium tumefaciens (strain C58)).